We begin with the raw amino-acid sequence, 263 residues long: SPRY domain-containing SOCS box protein 2 (263 aa).

A compositionally biased stretch (polar residues) spans 1-16 (MGQTALAGGSSSTPTP). The tract at residues 1–48 (MGQTALAGGSSSTPTPQALYPDLSCPEGLEELLSAPPPDLGAQRRHGW) is disordered. Residues 26-221 (PEGLEELLSA…VRIRYLGERR (196 aa)) enclose the B30.2/SPRY domain. An SOCS box domain is found at 222-263 (AEPHSLLHLSRLCVRHNLGDTRLGQVSALPLPPAMKRYLLYQ).

Belongs to the SPSB family. Component of the probable ECS(SPSB2) E3 ubiquitin-protein ligase complex which contains CUL5, RNF7/RBX2, Elongin BC complex and SPSB2. Interacts with CUL5, RNF7, ELOB and ELOC. Interacts with MET. Interacts (via B30.2/SPRY domain) with PAWR; this interaction occurs in association with the Elongin BC complex. Interacts with NOS2. As to quaternary structure, (Microbial infection) Interacts (via C-terminus) with HCV envelope glycoprotein E1. Interacts (via C-terminus) with HCV non-structural protein 5A; this interaction targets NS5A for ubiquitination and degradation.

The protein localises to the cytoplasm. It is found in the cytosol. The protein operates within protein modification; protein ubiquitination. In terms of biological role, substrate recognition component of a SCF-like ECS (Elongin BC-CUL2/5-SOCS-box protein) E3 ubiquitin-protein ligase complex which mediates the ubiquitination and subsequent proteasomal degradation of target proteins. Negatively regulates nitric oxide (NO) production and limits cellular toxicity in activated macrophages by mediating the ubiquitination and proteasomal degradation of NOS2. Acts as a bridge which links NOS2 with the ECS E3 ubiquitin ligase complex components ELOC and CUL5. The protein is SPRY domain-containing SOCS box protein 2 (SPSB2) of Homo sapiens (Human).